The sequence spans 272 residues: Imidazole glycerol phosphate synthase subunit HisF (272 aa).

Active-site residues include Asp-11 and Asp-130.

Belongs to the HisA/HisF family. In terms of assembly, heterodimer of HisH and HisF.

Its subcellular location is the cytoplasm. The enzyme catalyses 5-[(5-phospho-1-deoxy-D-ribulos-1-ylimino)methylamino]-1-(5-phospho-beta-D-ribosyl)imidazole-4-carboxamide + L-glutamine = D-erythro-1-(imidazol-4-yl)glycerol 3-phosphate + 5-amino-1-(5-phospho-beta-D-ribosyl)imidazole-4-carboxamide + L-glutamate + H(+). It participates in amino-acid biosynthesis; L-histidine biosynthesis; L-histidine from 5-phospho-alpha-D-ribose 1-diphosphate: step 5/9. In terms of biological role, IGPS catalyzes the conversion of PRFAR and glutamine to IGP, AICAR and glutamate. The HisF subunit catalyzes the cyclization activity that produces IGP and AICAR from PRFAR using the ammonia provided by the HisH subunit. In Methanococcus maripaludis (strain DSM 14266 / JCM 13030 / NBRC 101832 / S2 / LL), this protein is Imidazole glycerol phosphate synthase subunit HisF.